Here is a 114-residue protein sequence, read N- to C-terminus: T cell receptor beta variable 5-8 (114 aa).

Positions 1-21 are cleaved as a signal peptide; sequence MGPRLLFWALLCLLGTGPVEA. Residues 22–114 form the Ig-like domain; the sequence is GVTQSPTHLI…SALYLCASSL (93 aa). Cys42 and Cys110 form a disulfide bridge. Residue Asn90 is glycosylated (N-linked (GlcNAc...) asparagine).

Alpha-beta TR is a heterodimer composed of an alpha and beta chain; disulfide-linked. The alpha-beta TR is associated with the transmembrane signaling CD3 coreceptor proteins to form the TR-CD3 (TcR or TCR). The assembly of alpha-beta TR heterodimers with CD3 occurs in the endoplasmic reticulum where a single alpha-beta TR heterodimer associates with one CD3D-CD3E heterodimer, one CD3G-CD3E heterodimer and one CD247 homodimer forming a stable octameric structure. CD3D-CD3E and CD3G-CD3E heterodimers preferentially associate with TR alpha and TR beta chains, respectively. The association of the CD247 homodimer is the last step of TcR assembly in the endoplasmic reticulum and is required for transport to the cell surface.

It localises to the cell membrane. Its function is as follows. V region of the variable domain of T cell receptor (TR) beta chain that participates in the antigen recognition. Alpha-beta T cell receptors are antigen specific receptors which are essential to the immune response and are present on the cell surface of T lymphocytes. Recognize peptide-major histocompatibility (MH) (pMH) complexes that are displayed by antigen presenting cells (APC), a prerequisite for efficient T cell adaptive immunity against pathogens. Binding of alpha-beta TR to pMH complex initiates TR-CD3 clustering on the cell surface and intracellular activation of LCK that phosphorylates the ITAM motifs of CD3G, CD3D, CD3E and CD247 enabling the recruitment of ZAP70. In turn ZAP70 phosphorylates LAT, which recruits numerous signaling molecules to form the LAT signalosome. The LAT signalosome propagates signal branching to three major signaling pathways, the calcium, the mitogen-activated protein kinase (MAPK) kinase and the nuclear factor NF-kappa-B (NF-kB) pathways, leading to the mobilization of transcription factors that are critical for gene expression and essential for T cell growth and differentiation. The T cell repertoire is generated in the thymus, by V-(D)-J rearrangement. This repertoire is then shaped by intrathymic selection events to generate a peripheral T cell pool of self-MH restricted, non-autoaggressive T cells. Post-thymic interaction of alpha-beta TR with the pMH complexes shapes TR structural and functional avidity. The protein is T cell receptor beta variable 5-8 of Homo sapiens (Human).